The primary structure comprises 220 residues: MRLRNKPWARDAIAQNPDLVIQQPATWKGNWHRCFGRQAPLYIEVGTGKGQFLTGMAKHHPEINFIGIERYESVLVTAMERAKEAELTNLKFLSEDVYDLLDFFADGEVSRLFINFTDPWPKKRHEKRRLTYKDFLAKYEIVLKEKGDIHFKTDNQGLFEYSLHSFSKYGMILHNVSLDLHNSDFEGNIKTEYEEKFAKKGMRIYRCEAQFRTNEESHNL.

Glutamate 44, glutamate 69, aspartate 96, and aspartate 118 together coordinate S-adenosyl-L-methionine. Residue aspartate 118 is part of the active site. A substrate-binding site is contributed by lysine 122. Positions 124–129 (RHEKRR) are interaction with RNA. Substrate-binding positions include aspartate 154 and 191-194 (TEYE).

Belongs to the class I-like SAM-binding methyltransferase superfamily. TrmB family.

The catalysed reaction is guanosine(46) in tRNA + S-adenosyl-L-methionine = N(7)-methylguanosine(46) in tRNA + S-adenosyl-L-homocysteine. It functions in the pathway tRNA modification; N(7)-methylguanine-tRNA biosynthesis. Catalyzes the formation of N(7)-methylguanine at position 46 (m7G46) in tRNA. The polypeptide is tRNA (guanine-N(7)-)-methyltransferase (Halalkalibacterium halodurans (strain ATCC BAA-125 / DSM 18197 / FERM 7344 / JCM 9153 / C-125) (Bacillus halodurans)).